A 648-amino-acid polypeptide reads, in one-letter code: Serine/threonine-protein phosphatase 1 regulatory subunit PIG1 (648 aa).

The segment covering 20-51 (STSSFVSSTTSNSFSPLEDSTSASSSTSSSSS) has biased composition (low complexity). Residues 20–52 (STSSFVSSTTSNSFSPLEDSTSASSSTSSSSSG) form a disordered region. The region spanning 201–331 (HSLELSDPVS…NNDYKNYEIT (131 aa)) is the CBM21 domain. Residues 593 to 609 (RESSSPEISPLNTTTSL) show a composition bias toward polar residues. Positions 593-629 (RESSSPEISPLNTTTSLPFFPGDNMSDSSGEYEERTS) are disordered.

In terms of biological role, regulates the activity of glycogen synthase. It is most probably a regulatory subunit for protein phosphatase type 1. This Saccharomyces cerevisiae (strain ATCC 204508 / S288c) (Baker's yeast) protein is Serine/threonine-protein phosphatase 1 regulatory subunit PIG1 (PIG1).